A 380-amino-acid chain; its full sequence is Pregnancy-associated glycoprotein 6 (380 aa).

An N-terminal signal peptide occupies residues 1–15 (MKWLVLLGLVSISEC). The propeptide at 16 to 53 (IVKIPLRRVKTMRKTLSEKNMLNNFLKEHAYRLSQISF) is activation peptide. Residues Asn-57 and Asn-74 are each glycosylated (N-linked (GlcNAc...) asparagine). The Peptidase A1 domain maps to 71-377 (YLGNITIGTP…DRGHDRIGLA (307 aa)). Asp-89 is a catalytic residue. An intrachain disulfide couples Cys-102 to Cys-107. Asn-125 carries an N-linked (GlcNAc...) asparagine glycan. Cys-261 and Cys-265 are joined by a disulfide. Asp-270 is an active-site residue. A disulfide bridge connects residues Cys-303 and Cys-337.

Belongs to the peptidase A1 family. As to expression, trophoblast and placental tissue. Produced specifically in the invasive binucleate cells of the placenta.

It is found in the secreted. The protein resides in the extracellular space. The protein is Pregnancy-associated glycoprotein 6 of Ovis aries (Sheep).